Here is a 618-residue protein sequence, read N- to C-terminus: Dihydroxy-acid dehydratase (618 aa).

Aspartate 81 lines the Mg(2+) pocket. Cysteine 122 provides a ligand contact to [2Fe-2S] cluster. Mg(2+) is bound by residues aspartate 123 and lysine 124. Lysine 124 is modified (N6-carboxylysine). Cysteine 195 is a binding site for [2Fe-2S] cluster. Residue glutamate 490 participates in Mg(2+) binding. Residue serine 516 is the Proton acceptor of the active site.

Belongs to the IlvD/Edd family. As to quaternary structure, homodimer. [2Fe-2S] cluster is required as a cofactor. Requires Mg(2+) as cofactor.

It catalyses the reaction (2R)-2,3-dihydroxy-3-methylbutanoate = 3-methyl-2-oxobutanoate + H2O. The catalysed reaction is (2R,3R)-2,3-dihydroxy-3-methylpentanoate = (S)-3-methyl-2-oxopentanoate + H2O. It functions in the pathway amino-acid biosynthesis; L-isoleucine biosynthesis; L-isoleucine from 2-oxobutanoate: step 3/4. Its pathway is amino-acid biosynthesis; L-valine biosynthesis; L-valine from pyruvate: step 3/4. Functions in the biosynthesis of branched-chain amino acids. Catalyzes the dehydration of (2R,3R)-2,3-dihydroxy-3-methylpentanoate (2,3-dihydroxy-3-methylvalerate) into 2-oxo-3-methylpentanoate (2-oxo-3-methylvalerate) and of (2R)-2,3-dihydroxy-3-methylbutanoate (2,3-dihydroxyisovalerate) into 2-oxo-3-methylbutanoate (2-oxoisovalerate), the penultimate precursor to L-isoleucine and L-valine, respectively. The polypeptide is Dihydroxy-acid dehydratase (Gluconobacter oxydans (strain 621H) (Gluconobacter suboxydans)).